Here is a 159-residue protein sequence, read N- to C-terminus: Ribonuclease H (159 aa).

The region spanning 4 to 145 (THKQVNIYTD…CDKLARDAAE (142 aa)) is the RNase H type-1 domain. Aspartate 13, glutamate 51, aspartate 73, and aspartate 137 together coordinate Mg(2+).

Belongs to the RNase H family. As to quaternary structure, monomer. The cofactor is Mg(2+).

The protein resides in the cytoplasm. It carries out the reaction Endonucleolytic cleavage to 5'-phosphomonoester.. Functionally, endonuclease that specifically degrades the RNA of RNA-DNA hybrids. The chain is Ribonuclease H from Shewanella denitrificans (strain OS217 / ATCC BAA-1090 / DSM 15013).